The following is a 336-amino-acid chain: MLQTTNKPPLTIRLCQPRGFCAGVDRAIQIVVLALKKYGAPVYVRHEIVHNRYVVEGLQSLGAVFIEELSEIPAEHRRSPVVFSAHGVPKSVPADAQARNLFYLDATCPLVSKVHKQAMRHQRLGRHVLLIGHAGHPEVIGTMGQLPEGAVTLVETEADAARLVPADPKALGFVTQTTLSVEDTAGIIRALRERFPDLQAPAAESICYATTNRQEAVKDTAPGADLYLIVGAPNSSNSRRLVEVAERAGATMSLLVQRAAEIPWNDIGTISTLGLSAGASAPEIIVDEIIDAFRQRFDVTIDLAITATETEDFPVMRVLRDVELTPADMAFVNGAA.

Cys-21 contributes to the [4Fe-4S] cluster binding site. (2E)-4-hydroxy-3-methylbut-2-enyl diphosphate-binding residues include His-50 and His-86. Positions 50 and 86 each coordinate dimethylallyl diphosphate. Isopentenyl diphosphate is bound by residues His-50 and His-86. Cys-108 is a [4Fe-4S] cluster binding site. His-136 is a binding site for (2E)-4-hydroxy-3-methylbut-2-enyl diphosphate. His-136 contributes to the dimethylallyl diphosphate binding site. Position 136 (His-136) interacts with isopentenyl diphosphate. Glu-138 serves as the catalytic Proton donor. Thr-177 is a binding site for (2E)-4-hydroxy-3-methylbut-2-enyl diphosphate. Cys-207 lines the [4Fe-4S] cluster pocket. Residues Ser-235, Ser-236, Asn-237, and Ser-280 each coordinate (2E)-4-hydroxy-3-methylbut-2-enyl diphosphate. Dimethylallyl diphosphate-binding residues include Ser-235, Ser-236, Asn-237, and Ser-280. Isopentenyl diphosphate contacts are provided by Ser-235, Ser-236, Asn-237, and Ser-280.

It belongs to the IspH family. [4Fe-4S] cluster is required as a cofactor.

It catalyses the reaction isopentenyl diphosphate + 2 oxidized [2Fe-2S]-[ferredoxin] + H2O = (2E)-4-hydroxy-3-methylbut-2-enyl diphosphate + 2 reduced [2Fe-2S]-[ferredoxin] + 2 H(+). It carries out the reaction dimethylallyl diphosphate + 2 oxidized [2Fe-2S]-[ferredoxin] + H2O = (2E)-4-hydroxy-3-methylbut-2-enyl diphosphate + 2 reduced [2Fe-2S]-[ferredoxin] + 2 H(+). Its pathway is isoprenoid biosynthesis; dimethylallyl diphosphate biosynthesis; dimethylallyl diphosphate from (2E)-4-hydroxy-3-methylbutenyl diphosphate: step 1/1. The protein operates within isoprenoid biosynthesis; isopentenyl diphosphate biosynthesis via DXP pathway; isopentenyl diphosphate from 1-deoxy-D-xylulose 5-phosphate: step 6/6. Functionally, catalyzes the conversion of 1-hydroxy-2-methyl-2-(E)-butenyl 4-diphosphate (HMBPP) into a mixture of isopentenyl diphosphate (IPP) and dimethylallyl diphosphate (DMAPP). Acts in the terminal step of the DOXP/MEP pathway for isoprenoid precursor biosynthesis. The sequence is that of 4-hydroxy-3-methylbut-2-enyl diphosphate reductase from Mesorhizobium japonicum (strain LMG 29417 / CECT 9101 / MAFF 303099) (Mesorhizobium loti (strain MAFF 303099)).